A 166-amino-acid polypeptide reads, in one-letter code: Ribosome maturation factor RimM (166 aa).

The PRC barrel domain maps to 94 to 166 (EDEFYITDLN…AILNYKRDEL (73 aa)).

It belongs to the RimM family. As to quaternary structure, binds ribosomal protein uS19.

Its subcellular location is the cytoplasm. Functionally, an accessory protein needed during the final step in the assembly of 30S ribosomal subunit, possibly for assembly of the head region. Essential for efficient processing of 16S rRNA. May be needed both before and after RbfA during the maturation of 16S rRNA. It has affinity for free ribosomal 30S subunits but not for 70S ribosomes. This Rickettsia bellii (strain RML369-C) protein is Ribosome maturation factor RimM.